The primary structure comprises 276 residues: Sulfur carrier protein FdhD (276 aa).

The active-site Cysteine persulfide intermediate is the Cys-122. Residue 259 to 264 participates in Mo-bis(molybdopterin guanine dinucleotide) binding; it reads FCKPGK.

It belongs to the FdhD family.

It is found in the cytoplasm. In terms of biological role, required for formate dehydrogenase (FDH) activity. Acts as a sulfur carrier protein that transfers sulfur from IscS to the molybdenum cofactor prior to its insertion into FDH. This is Sulfur carrier protein FdhD from Photorhabdus laumondii subsp. laumondii (strain DSM 15139 / CIP 105565 / TT01) (Photorhabdus luminescens subsp. laumondii).